The sequence spans 526 residues: Amino acid transporter heavy chain SLC3A2 (526 aa).

Positions 1–31 (MSQDTEVDMKDVELNELEPEKQPMNAADGAA) are disordered. Residues 1-75 (MSQDTEVDMK…AGSPGWVRTR (75 aa)) lie on the Cytoplasmic side of the membrane. Ser2 carries the phosphoserine modification. Thr5 is subject to Phosphothreonine. The segment covering 7 to 21 (VDMKDVELNELEPEK) has biased composition (basic and acidic residues). Lys42 participates in a covalent cross-link: Glycyl lysine isopeptide (Lys-Gly) (interchain with G-Cter in ubiquitin). Ser58 carries the post-translational modification Phosphoserine. A Glycyl lysine isopeptide (Lys-Gly) (interchain with G-Cter in SUMO2) cross-link involves residue Lys59. The helical; Signal-anchor for type II membrane protein transmembrane segment at 76–99 (WALLLLFWLGWLGMLAGAVVIIVR) threads the bilayer. At 100-526 (APRCRELPVQ…GLLLQFPFVA (427 aa)) the chain is on the extracellular side. Residues Asn166, Asn259, and Asn263 are each glycosylated (N-linked (GlcNAc...) asparagine). Ser300 carries the post-translational modification Phosphoserine. The N-linked (GlcNAc...) asparagine glycan is linked to Asn301. Phosphoserine is present on Ser302. 3 N-linked (GlcNAc...) asparagine glycosylation sites follow: Asn318, Asn385, and Asn399. Position 420 is a phosphoserine (Ser420). Residue Asn509 is glycosylated (N-linked (GlcNAc...) asparagine).

The protein belongs to the SLC3A transporter family. As to quaternary structure, disulfide-linked heterodimer with a non-glycosylated light chain (SLC7A5, SLC7A6, SLC7A7, SLC7A8, SLC7A10 or SLC7A11). Interacts with TLCD3A/CT120 and ICAM1. Constitutively and specifically associates with beta-1 integrins (alpha-2/beta-1, alpha-3/beta-1, alpha-5/beta-1 and alpha-6/beta-1), but minimally with alpha-4/beta-1. Interacts with LAPTM4B; recruits SLC3A2 and SLC7A5 to lysosomes to promote leucine uptake into these organelles and is required for mTORC1 activation. Phosphorylation on Ser-300 or Ser-302 and on Ser-420 by ecto-protein kinases favors heterotypic cell-cell interactions. Post-translationally, N-glycosylated; N-glycosylation is crucial for trafficking and stability of SLC3A2 to the plasma membrane. Detected on the surface of embryonic epithelial cells in the epidermis, thymus, kidney, intestine, brain choroid plexus, and in retina. Detected in adult and embryonic brain, spleen, kidney, intestine and liver, and in adult testis (at protein level). Observed in all adult tissues tested with strongest expression in kidney, small intestine, spleen, thymus and liver. Moderate expression in brain, stomach, heart, testis, lung, skin, pancreas and skeletal muscle. In brain expressed on capillary endothelia in cerebral cortex.

It is found in the apical cell membrane. The protein localises to the cell membrane. The protein resides in the cell junction. Its subcellular location is the lysosome membrane. It localises to the melanosome. It is found in the basolateral cell membrane. Its function is as follows. Acts as a chaperone that facilitates biogenesis and trafficking of functional transporters heterodimers to the plasma membrane. Forms heterodimer with SLC7 family transporters (SLC7A5, SLC7A6, SLC7A7, SLC7A8, SLC7A10 and SLC7A11), a group of amino-acid antiporters. Heterodimers function as amino acids exchangers, the specificity of the substrate depending on the SLC7A subunit. Heterodimers SLC3A2/SLC7A6 or SLC3A2/SLC7A7 mediate the uptake of dibasic amino acids. Heterodimer SLC3A2/SLC7A11 functions as an antiporter by mediating the exchange of extracellular anionic L-cystine and intracellular L-glutamate across the cellular plasma membrane. SLC3A2/SLC7A10 translocates small neutral L- and D-amino acids across the plasma membrane. SLC3A2/SLC75 or SLC3A2/SLC7A8 translocates neutral amino acids with broad specificity, thyroid hormones and L-DOPA. SLC3A2 is essential for plasma membrane localization, stability, and the transport activity of SLC7A5 and SLC7A8. When associated with LAPTM4B, the heterodimer SLC7A5 is recruited to lysosomes to promote leucine uptake into these organelles, and thereby mediates mTORC1 activation. Modulates integrin-related signaling and is essential for integrin-dependent cell spreading, migration and tumor progression. This is Amino acid transporter heavy chain SLC3A2 from Mus musculus (Mouse).